The primary structure comprises 470 residues: tRNA (guanine(37)-N(1))-methyltransferase (470 aa).

S-adenosyl-L-methionine contacts are provided by residues 304–305 (DL), 332–333 (DG), and Asn-370.

The protein belongs to the class I-like SAM-binding methyltransferase superfamily. TRM5/TYW2 family. In terms of assembly, monomer.

Its subcellular location is the mitochondrion matrix. The protein resides in the nucleus. It localises to the cytoplasm. It carries out the reaction guanosine(37) in tRNA + S-adenosyl-L-methionine = N(1)-methylguanosine(37) in tRNA + S-adenosyl-L-homocysteine + H(+). Functionally, specifically methylates the N1 position of guanosine-37 in various cytoplasmic and mitochondrial tRNAs. Methylation is not dependent on the nature of the nucleoside 5' of the target nucleoside. This is the first step in the biosynthesis of wybutosine (yW), a modified base adjacent to the anticodon of tRNAs and required for accurate decoding. In Theileria parva (East coast fever infection agent), this protein is tRNA (guanine(37)-N(1))-methyltransferase.